Here is a 43-residue protein sequence, read N- to C-terminus: Protein PsbN (43 aa).

Residues 7-24 (VAISISRSLVSFTGYALY) traverse the membrane as a helical segment.

The protein belongs to the PsbN family.

It localises to the plastid. The protein localises to the chloroplast thylakoid membrane. In terms of biological role, may play a role in photosystem I and II biogenesis. The polypeptide is Protein PsbN (Ginkgo biloba (Ginkgo)).